Here is a 523-residue protein sequence, read N- to C-terminus: FAD:protein FMN transferase (523 aa).

3 helical membrane passes run 88 to 108, 118 to 138, and 169 to 189; these read LLAG…VALA, GGAA…LVLL, and GLAL…TAPA. Residues 277 to 279 and Asp-336 each bind FAD; that span reads LFD. Ala-339 contacts Mg(2+). Residues Lys-342 and 423–425 contribute to the FAD site; that span reads HII. 2 residues coordinate Mg(2+): Asp-450 and Thr-454.

The protein in the N-terminal section; belongs to the RseC family. This sequence in the C-terminal section; belongs to the ApbE family. Mg(2+) serves as cofactor.

It is found in the cell membrane. It catalyses the reaction L-threonyl-[protein] + FAD = FMN-L-threonyl-[protein] + AMP + H(+). Flavin transferase that catalyzes the transfer of the FMN moiety of FAD and its covalent binding to the hydroxyl group of a threonine residue in a target flavoprotein. Is likely involved in the modification of RnfG and RnfD. Required for nitrogen fixation. The polypeptide is FAD:protein FMN transferase (Rhodobacter capsulatus (Rhodopseudomonas capsulata)).